The following is a 69-amino-acid chain: MIFKVFYQETLTETPVREKTQSLYVEAESEVKVRQLLKDEPFHIEFVEKISDAHLAYEKENPDFALWEK.

Belongs to the RNA polymerase subunit epsilon family. In terms of assembly, RNAP is composed of a core of 2 alpha, a beta and a beta' subunit. The core is associated with a delta subunit, and at least one of epsilon or omega. When a sigma factor is associated with the core the holoenzyme is formed, which can initiate transcription.

It catalyses the reaction RNA(n) + a ribonucleoside 5'-triphosphate = RNA(n+1) + diphosphate. In terms of biological role, a non-essential component of RNA polymerase (RNAP). In Listeria monocytogenes serotype 4b (strain CLIP80459), this protein is DNA-directed RNA polymerase subunit epsilon.